We begin with the raw amino-acid sequence, 555 residues long: Neutral amino acid transporter B(0) (555 aa).

M1 bears the N-acetylmethionine mark. Residues 1–52 lie on the Cytoplasmic side of the membrane; that stretch reads MAVDPPKADPKGVVAVDPTANCGSGLKSREDQGAKAGGCCSSRDQVCRCLRA. A helical membrane pass occupies residues 53-82; sequence NLLVLLTVAAAVAGVVLGLGVSAAGGAEAL. The Extracellular portion of the chain corresponds to 83 to 95; it reads GHARFTAFAFPGE. A helical membrane pass occupies residues 96–117; it reads LLLRLLEMIILPLVVCSLIGGA. Topologically, residues 118 to 131 are cytoplasmic; sequence ASLDPSALGRLGAW. The chain crosses the membrane as a helical span at residues 132–154; the sequence is ALLFFLVTTLLSSALGVALALAL. At 155–239 the chain is on the extracellular side; that stretch reads KPGAAFAAIN…SNATMDQPHC (85 aa). 2 N-linked (GlcNAc...) asparagine glycosylation sites follow: N164 and N231. The helical transmembrane segment at 240–262 threads the bilayer; that stretch reads EMKMNILGLVVFAIVFGVALRKL. At 263 to 271 the chain is on the cytoplasmic side; it reads GPEGELLIR. The helical transmembrane segment at 272–299 threads the bilayer; sequence FFNSFNDATMVLVSWIMWYAPIGILFLV. The Extracellular portion of the chain corresponds to 300 to 320; it reads AGKIVEMKDIRQLFIGLGKYI. Residues 321-342 form a helical membrane-spanning segment; that stretch reads VCCLLGHAIHGLLVLPLIYFLF. The Cytoplasmic segment spans residues 343-347; the sequence is TRKNP. The segment at residues 348–378 is an intramembrane region (discontinuously helical); it reads YRFLWGIVTPLATAFGTSSSSATLPLMMKCV. Residues 379 to 387 are Cytoplasmic-facing; that stretch reads EEKNGVAKH. Residues 388 to 414 form a helical membrane-spanning segment; that stretch reads ISRFILPIGATVNMDGAALFQCVAAVF. Na(+)-binding residues include G396, T398, and N400. The Extracellular segment spans residues 415–427; the sequence is IAQLNGMSLDFVK. An intramembrane region (discontinuously helical) is located at residues 428–461; the sequence is IITILVTATASSVGAAGIPAGGVLTLAIILEAIS. Over 462–474 the chain is Extracellular; sequence LPVKDISLILAVD. A helical transmembrane segment spans residues 475–496; the sequence is WLVDRSCTVLNVEGDAFGAGLL. Na(+) is bound by residues N485 and D489. Residues 497-555 lie on the Cytoplasmic side of the membrane; it reads QSYVDRTKMPSSEPELIQVKNDVSLKPLPLATEEGNPLLKQCREPSGDSSATCEKESVM. Phosphoserine occurs at positions 507, 508, 520, 545, and 553. A disordered region spans residues 534–555; that stretch reads LLKQCREPSGDSSATCEKESVM.

Belongs to the dicarboxylate/amino acid:cation symporter (DAACS) (TC 2.A.23) family. In terms of assembly, homotrimer.

Its subcellular location is the cell membrane. The protein localises to the melanosome. It catalyses the reaction L-glutamine(out) + L-serine(in) + Na(+)(out) = L-glutamine(in) + L-serine(out) + Na(+)(in). It carries out the reaction L-glutamine(in) + L-serine(out) + Na(+)(out) = L-glutamine(out) + L-serine(in) + Na(+)(in). The enzyme catalyses L-threonine(in) + L-glutamine(out) + Na(+)(out) = L-threonine(out) + L-glutamine(in) + Na(+)(in). The catalysed reaction is L-threonine(out) + L-glutamine(in) + Na(+)(out) = L-threonine(in) + L-glutamine(out) + Na(+)(in). It catalyses the reaction L-asparagine(in) + L-glutamine(out) + Na(+)(out) = L-asparagine(out) + L-glutamine(in) + Na(+)(in). It carries out the reaction L-asparagine(out) + L-glutamine(in) + Na(+)(out) = L-asparagine(in) + L-glutamine(out) + Na(+)(in). The enzyme catalyses L-glutamine(in) + L-alanine(out) + Na(+)(out) = L-glutamine(out) + L-alanine(in) + Na(+)(in). The catalysed reaction is L-valine(out) + L-glutamine(in) + Na(+)(out) = L-valine(in) + L-glutamine(out) + Na(+)(in). It catalyses the reaction L-glutamine(in) + L-methionine(out) + Na(+)(out) = L-glutamine(out) + L-methionine(in) + Na(+)(in). It carries out the reaction L-glutamine(in) + L-glutamate(out) + Na(+)(out) + H(+)(out) = L-glutamine(out) + L-glutamate(in) + Na(+)(in) + H(+)(in). The enzyme catalyses D-serine(in) + L-glutamine(out) + Na(+)(out) = D-serine(out) + L-glutamine(in) + Na(+)(in). The catalysed reaction is D-serine(in) + L-alanine(out) + Na(+)(out) = D-serine(out) + L-alanine(in) + Na(+)(in). It catalyses the reaction nitrate(in) = nitrate(out). It carries out the reaction iodide(out) = iodide(in). The enzyme catalyses thiocyanate(in) = thiocyanate(out). With respect to regulation, down-regulated at acidic pH. Functionally, sodium-coupled antiporter of neutral amino acids. In a tri-substrate transport cycle, exchanges neutral amino acids between the extracellular and intracellular compartments, coupled to the inward cotransport of at least one sodium ion. The preferred substrate is the essential amino acid L-glutamine, a precursor for biosynthesis of proteins, nucleotides and amine sugars as well as an alternative fuel for mitochondrial oxidative phosphorylation. Exchanges L-glutamine with other neutral amino acids such as L-serine, L-threonine and L-asparagine in a bidirectional way. Provides L-glutamine to proliferating stem and activated cells driving the metabolic switch toward cell differentiation. The transport cycle is usually pH-independent, with the exception of L-glutamate. Transports extracellular L-glutamate coupled to the cotransport of one proton and one sodium ion in exchange for intracellular L-glutamine counter-ion. May provide for L-glutamate uptake in glial cells regulating glutamine/glutamate cycle in the nervous system. Can transport D-amino acids. Mediates D-serine release from the retinal glia potentially affecting NMDA receptor function in retinal neurons. Displays sodium- and amino acid-dependent but uncoupled channel-like anion conductance with a preference SCN(-) &gt;&gt; NO3(-) &gt; I(-) &gt; Cl(-). Through binding of the fusogenic protein syncytin-1/ERVW-1 may mediate trophoblasts syncytialization, the spontaneous fusion of their plasma membranes, an essential process in placental development. The sequence is that of Neutral amino acid transporter B(0) (Slc1a5) from Rattus norvegicus (Rat).